Reading from the N-terminus, the 104-residue chain is Protein SMALL AUXIN UP-REGULATED RNA 9 (104 aa).

It belongs to the ARG7 family. Interacts with and inhibits PP2C-D subfamily of type 2C phosphatases such as PP2C67/PP2C-D1. Expressed in etiolated hypocotyls, petioles, leaves and flowers.

The protein resides in the cell membrane. Functionally, provide a mechanistic link between auxin and plasma membrane H(+)-ATPases (PM H(+)-ATPases, e.g. AHA1 and AHA2), and triggers PM H(+)-ATPases activity by promoting phosphorylation of their C-terminal autoinhibitory domain as a result of PP2C-D subfamily of type 2C phosphatases inhibition, thus leading to the acidification of the apoplast and the facilitation of solutes and water uptake to drive cell expansion. Triggers plant growth probably by promoting cell elongation. Regulates branch angles and bending. Probably involved in light intensity mediated root development. The polypeptide is Protein SMALL AUXIN UP-REGULATED RNA 9 (Arabidopsis thaliana (Mouse-ear cress)).